A 224-amino-acid polypeptide reads, in one-letter code: Lipoprotein-releasing system ATP-binding protein LolD (224 aa).

One can recognise an ABC transporter domain in the interval 4–224 (YTAKDISKNY…TLLDGSLQEE (221 aa)). 40–47 (GASGSGKT) provides a ligand contact to ATP.

This sequence belongs to the ABC transporter superfamily. Lipoprotein translocase (TC 3.A.1.125) family. The complex is composed of two ATP-binding proteins (LolD) and two transmembrane proteins (LolC and LolE).

The protein localises to the cell inner membrane. In terms of biological role, part of the ABC transporter complex LolCDE involved in the translocation of mature outer membrane-directed lipoproteins, from the inner membrane to the periplasmic chaperone, LolA. Responsible for the formation of the LolA-lipoprotein complex in an ATP-dependent manner. The chain is Lipoprotein-releasing system ATP-binding protein LolD from Desulfotalea psychrophila (strain LSv54 / DSM 12343).